A 113-amino-acid chain; its full sequence is Major basic nuclear protein 1 (113 aa).

The tract at residues 1–20 is disordered; the sequence is MAPKMKAAMKAMKAPAMKGK.

The protein localises to the nucleus. This is Major basic nuclear protein 1 (HCc1) from Crypthecodinium cohnii (Dinoflagellate).